Here is a 332-residue protein sequence, read N- to C-terminus: GTP 3',8-cyclase (332 aa).

In terms of domain architecture, Radical SAM core spans 7 to 221; it reads QYERLHDYVR…FDLCKQAGLD (215 aa). GTP is bound at residue Arg-16. [4Fe-4S] cluster contacts are provided by Cys-23 and Cys-27. Residue Tyr-29 coordinates S-adenosyl-L-methionine. Cys-30 lines the [4Fe-4S] cluster pocket. Residue Arg-66 participates in GTP binding. An S-adenosyl-L-methionine-binding site is contributed by Gly-70. Thr-97 provides a ligand contact to GTP. Ser-121 provides a ligand contact to S-adenosyl-L-methionine. Lys-158 serves as a coordination point for GTP. Met-192 provides a ligand contact to S-adenosyl-L-methionine. The [4Fe-4S] cluster site is built by Cys-256 and Cys-259. Position 261 to 263 (261 to 263) interacts with GTP; the sequence is RLR. Residue Cys-273 coordinates [4Fe-4S] cluster.

Belongs to the radical SAM superfamily. MoaA family. Monomer and homodimer. The cofactor is [4Fe-4S] cluster.

The enzyme catalyses GTP + AH2 + S-adenosyl-L-methionine = (8S)-3',8-cyclo-7,8-dihydroguanosine 5'-triphosphate + 5'-deoxyadenosine + L-methionine + A + H(+). The protein operates within cofactor biosynthesis; molybdopterin biosynthesis. Catalyzes the cyclization of GTP to (8S)-3',8-cyclo-7,8-dihydroguanosine 5'-triphosphate. The polypeptide is GTP 3',8-cyclase (Limosilactobacillus fermentum (strain NBRC 3956 / LMG 18251) (Lactobacillus fermentum)).